We begin with the raw amino-acid sequence, 550 residues long: DNA mismatch repair protein MutL (550 aa).

It belongs to the DNA mismatch repair MutL/HexB family.

In terms of biological role, this protein is involved in the repair of mismatches in DNA. It is required for dam-dependent methyl-directed DNA mismatch repair. May act as a 'molecular matchmaker', a protein that promotes the formation of a stable complex between two or more DNA-binding proteins in an ATP-dependent manner without itself being part of a final effector complex. This is DNA mismatch repair protein MutL from Microcystis aeruginosa (strain NIES-843 / IAM M-2473).